Reading from the N-terminus, the 252-residue chain is Thiazole synthase (252 aa).

Catalysis depends on K91, which acts as the Schiff-base intermediate with DXP. 1-deoxy-D-xylulose 5-phosphate-binding positions include G152, 179 to 180 (AG), and 201 to 202 (NT).

The protein belongs to the ThiG family. As to quaternary structure, homotetramer. Forms heterodimers with either ThiH or ThiS.

It is found in the cytoplasm. It catalyses the reaction [ThiS sulfur-carrier protein]-C-terminal-Gly-aminoethanethioate + 2-iminoacetate + 1-deoxy-D-xylulose 5-phosphate = [ThiS sulfur-carrier protein]-C-terminal Gly-Gly + 2-[(2R,5Z)-2-carboxy-4-methylthiazol-5(2H)-ylidene]ethyl phosphate + 2 H2O + H(+). It participates in cofactor biosynthesis; thiamine diphosphate biosynthesis. Its function is as follows. Catalyzes the rearrangement of 1-deoxy-D-xylulose 5-phosphate (DXP) to produce the thiazole phosphate moiety of thiamine. Sulfur is provided by the thiocarboxylate moiety of the carrier protein ThiS. In vitro, sulfur can be provided by H(2)S. This chain is Thiazole synthase, found in Erwinia pyrifoliae (strain DSM 12162 / Ep1/96).